A 654-amino-acid polypeptide reads, in one-letter code: Coiled-coil domain-containing protein 30 (654 aa).

The tract at residues 38–65 is disordered; it reads TLESRRDPNSSLQKEFPQHQDEDQSRAA. A compositionally biased stretch (basic and acidic residues) spans 53-62; that stretch reads FPQHQDEDQS. Coiled coils occupy residues 97-244 and 276-559; these read REER…LDNA and KSQQ…QIIR. Residues 614 to 654 are disordered; sequence AAAIPKSPEPLSRSQDSESGYINVTSLKETHNTQGDQKPEL. Residues 625 to 654 show a composition bias toward polar residues; the sequence is SRSQDSESGYINVTSLKETHNTQGDQKPEL.

It belongs to the prefoldin subunit beta family.

In Mus musculus (Mouse), this protein is Coiled-coil domain-containing protein 30 (Ccdc30).